The primary structure comprises 664 residues: Exoribonuclease 2 (664 aa).

Positions 193–521 (RIDMTHIPFV…INHRMLKALI (329 aa)) constitute an RNB domain. Positions 568 to 650 (QTLFTGEIFD…ENRSLVAKPT (83 aa)) constitute an S1 motif domain.

It belongs to the RNR ribonuclease family. RNase II subfamily.

Its subcellular location is the cytoplasm. The catalysed reaction is Exonucleolytic cleavage in the 3'- to 5'-direction to yield nucleoside 5'-phosphates.. In terms of biological role, involved in mRNA degradation. Hydrolyzes single-stranded polyribonucleotides processively in the 3' to 5' direction. The chain is Exoribonuclease 2 from Vibrio vulnificus (strain YJ016).